We begin with the raw amino-acid sequence, 327 residues long: D-alanine--D-alanine ligase (327 aa).

The ATP-grasp domain occupies Lys-113–Ala-312. Ala-139 to Thr-194 contacts ATP. Positions 266, 279, and 281 each coordinate Mg(2+).

It belongs to the D-alanine--D-alanine ligase family. The cofactor is Mg(2+). Mn(2+) is required as a cofactor.

The protein localises to the cytoplasm. The catalysed reaction is 2 D-alanine + ATP = D-alanyl-D-alanine + ADP + phosphate + H(+). It participates in cell wall biogenesis; peptidoglycan biosynthesis. Its function is as follows. Cell wall formation. The protein is D-alanine--D-alanine ligase of Cupriavidus necator (strain ATCC 17699 / DSM 428 / KCTC 22496 / NCIMB 10442 / H16 / Stanier 337) (Ralstonia eutropha).